Here is a 189-residue protein sequence, read N- to C-terminus: Peptidyl-tRNA hydrolase (189 aa).

Position 14 (Tyr14) interacts with tRNA. His19 functions as the Proton acceptor in the catalytic mechanism. TRNA-binding residues include Tyr64, Asn66, and Asn112.

The protein belongs to the PTH family. In terms of assembly, monomer.

Its subcellular location is the cytoplasm. The catalysed reaction is an N-acyl-L-alpha-aminoacyl-tRNA + H2O = an N-acyl-L-amino acid + a tRNA + H(+). Its function is as follows. Hydrolyzes ribosome-free peptidyl-tRNAs (with 1 or more amino acids incorporated), which drop off the ribosome during protein synthesis, or as a result of ribosome stalling. In terms of biological role, catalyzes the release of premature peptidyl moieties from peptidyl-tRNA molecules trapped in stalled 50S ribosomal subunits, and thus maintains levels of free tRNAs and 50S ribosomes. The protein is Peptidyl-tRNA hydrolase of Finegoldia magna (strain ATCC 29328 / DSM 20472 / WAL 2508) (Peptostreptococcus magnus).